Consider the following 495-residue polypeptide: Cobyric acid synthase (495 aa).

One can recognise a GATase cobBQ-type domain in the interval 249-442 (KFIVKVPVVT…LHGVFDEPEA (194 aa)). Residue Cys-330 is the Nucleophile of the active site. The active site involves His-434.

It belongs to the CobB/CobQ family. CobQ subfamily.

It functions in the pathway cofactor biosynthesis; adenosylcobalamin biosynthesis. Its function is as follows. Catalyzes amidations at positions B, D, E, and G on adenosylcobyrinic A,C-diamide. NH(2) groups are provided by glutamine, and one molecule of ATP is hydrogenolyzed for each amidation. In Aliivibrio fischeri (strain ATCC 700601 / ES114) (Vibrio fischeri), this protein is Cobyric acid synthase.